We begin with the raw amino-acid sequence, 196 residues long: Carnitine operon protein CaiE (196 aa).

The segment at 173 to 196 (TQPLRQMEENRPRLQGTTDVTPKR) is disordered. Positions 187–196 (QGTTDVTPKR) are enriched in polar residues.

It belongs to the transferase hexapeptide repeat family.

It participates in amine and polyamine metabolism; carnitine metabolism. Overproduction of CaiE stimulates the activity of CaiB and CaiD. In Shigella flexneri serotype 5b (strain 8401), this protein is Carnitine operon protein CaiE.